The following is a 210-amino-acid chain: Stress-response A/B barrel domain-containing protein DABB1 (210 aa).

Stress-response A/B barrel domains lie at 5–100 and 116–204; these read VEHV…AVDW and IGKI…VVEF.

In terms of assembly, homodimer.

Its subcellular location is the cytoplasm. It is found in the cytosol. Its function is as follows. Involved in defense against fungal pathogens. Possesses antifungal activity against diverse pathogenic fungi. The chain is Stress-response A/B barrel domain-containing protein DABB1 from Arabidopsis thaliana (Mouse-ear cress).